A 151-amino-acid polypeptide reads, in one-letter code: MKLILTAEVEHLGVAGDTVEVKDGYGRNYLLPRGLAIVATRGAQRQADDIRRAQELKGVKGLEHARELKTAIEALESVELSVKTAGDSGKLFGSVTAADVVSAIKKAGGPNLEKRTVDLPKAHIKSTGTHPITVRLHPDVNAALSLNVVAG.

Belongs to the bacterial ribosomal protein bL9 family.

Binds to the 23S rRNA. The protein is Large ribosomal subunit protein bL9 of Mycolicibacterium gilvum (strain PYR-GCK) (Mycobacterium gilvum (strain PYR-GCK)).